A 97-amino-acid chain; its full sequence is Small ribosomal subunit protein bS20 (97 aa).

Belongs to the bacterial ribosomal protein bS20 family.

Functionally, binds directly to 16S ribosomal RNA. This chain is Small ribosomal subunit protein bS20, found in Gloeothece citriformis (strain PCC 7424) (Cyanothece sp. (strain PCC 7424)).